Here is a 51-residue protein sequence, read N- to C-terminus: Large ribosomal subunit protein bL33 (51 aa).

The tract at residues 1–21 is disordered; the sequence is MRDKIKLESGAGTGHFYTTTK.

The protein belongs to the bacterial ribosomal protein bL33 family.

In Neisseria gonorrhoeae (strain ATCC 700825 / FA 1090), this protein is Large ribosomal subunit protein bL33.